Here is a 393-residue protein sequence, read N- to C-terminus: Chorismate synthase (393 aa).

Residues Arg40 and Arg46 each contribute to the NADP(+) site. FMN contacts are provided by residues 129 to 131, 250 to 251, Gly301, 316 to 320, and Arg342; these read RAS, QA, and KPIST.

This sequence belongs to the chorismate synthase family. As to quaternary structure, homotetramer. Requires FMNH2 as cofactor.

The catalysed reaction is 5-O-(1-carboxyvinyl)-3-phosphoshikimate = chorismate + phosphate. It functions in the pathway metabolic intermediate biosynthesis; chorismate biosynthesis; chorismate from D-erythrose 4-phosphate and phosphoenolpyruvate: step 7/7. Catalyzes the anti-1,4-elimination of the C-3 phosphate and the C-6 proR hydrogen from 5-enolpyruvylshikimate-3-phosphate (EPSP) to yield chorismate, which is the branch point compound that serves as the starting substrate for the three terminal pathways of aromatic amino acid biosynthesis. This reaction introduces a second double bond into the aromatic ring system. The protein is Chorismate synthase of Acidobacterium capsulatum (strain ATCC 51196 / DSM 11244 / BCRC 80197 / JCM 7670 / NBRC 15755 / NCIMB 13165 / 161).